The sequence spans 576 residues: DNA mismatch repair protein MutL (576 aa).

Belongs to the DNA mismatch repair MutL/HexB family.

This protein is involved in the repair of mismatches in DNA. It is required for dam-dependent methyl-directed DNA mismatch repair. May act as a 'molecular matchmaker', a protein that promotes the formation of a stable complex between two or more DNA-binding proteins in an ATP-dependent manner without itself being part of a final effector complex. This is DNA mismatch repair protein MutL from Chlamydia trachomatis serovar L2 (strain ATCC VR-902B / DSM 19102 / 434/Bu).